Here is a 298-residue protein sequence, read N- to C-terminus: GTP cyclohydrolase FolE2 (298 aa).

The protein belongs to the GTP cyclohydrolase IV family.

It catalyses the reaction GTP + H2O = 7,8-dihydroneopterin 3'-triphosphate + formate + H(+). It functions in the pathway cofactor biosynthesis; 7,8-dihydroneopterin triphosphate biosynthesis; 7,8-dihydroneopterin triphosphate from GTP: step 1/1. Functionally, converts GTP to 7,8-dihydroneopterin triphosphate. The protein is GTP cyclohydrolase FolE2 of Pseudomonas fluorescens (strain Pf0-1).